Reading from the N-terminus, the 376-residue chain is DnaJ homolog subfamily B member 12 (376 aa).

Met-1 carries the post-translational modification N-acetylmethionine. The segment at 45–97 (ALIESLNQKPQSTGDHPQPTDTTHTTTKKAGGTETPSANGEAGGGESAKGYTS) is disordered. Residues 57–84 (TGDHPQPTDTTHTTTKKAGGTETPSANG) show a composition bias toward low complexity. The J domain maps to 111 to 175 (DYYEILGVSR…EKRKQYDQFG (65 aa)). His-186 carries the post-translational modification Pros-methylhistidine. The helical transmembrane segment at 243 to 263 (GGLGVFVQLMPILILILVSAL) threads the bilayer.

It belongs to the DnaJ family. DNAJB12/DNAJB14 subfamily. Homodimer and homotetramer. Interacts (via J domain) with HSPA8/Hsc70. Forms a multiprotein complex, at least composed of DNAJB12, DNAJB14, HSPA8/Hsc70 and SGTA; interaction with DNAJB14 and HSPA8/Hsc70 is direct. Methylated at His-186 by METTL9.

It localises to the endoplasmic reticulum membrane. The protein localises to the nucleus membrane. Functionally, acts as a co-chaperone with HSPA8/Hsc70; required to promote protein folding and trafficking, prevent aggregation of client proteins, and promote unfolded proteins to endoplasmic reticulum-associated degradation (ERAD) pathway. Acts by determining HSPA8/Hsc70's ATPase and polypeptide-binding activities. Can also act independently of HSPA8/Hsc70: together with DNAJB14, acts as a chaperone that promotes maturation of potassium channels KCND2 and KCNH2 by stabilizing nascent channel subunits and assembling them into tetramers. While stabilization of nascent channel proteins is dependent on HSPA8/Hsc70, the process of oligomerization of channel subunits is independent of HSPA8/Hsc70. When overexpressed, forms membranous structures together with DNAJB14 and HSPA8/Hsc70 within the nucleus; the role of these structures, named DJANGOs, is still unclear. In Mus musculus (Mouse), this protein is DnaJ homolog subfamily B member 12.